A 477-amino-acid polypeptide reads, in one-letter code: Bifunctional protein HldE (477 aa).

Residues 1-318 (MKVNLPAFER…ENAVRGRADT (318 aa)) form a ribokinase region. 195-198 (NLSE) contacts ATP. D264 is a catalytic residue. The cytidylyltransferase stretch occupies residues 344-477 (MTNGVFDILH…IKKIQTESEK (134 aa)).

The protein in the N-terminal section; belongs to the carbohydrate kinase PfkB family. This sequence in the C-terminal section; belongs to the cytidylyltransferase family. In terms of assembly, homodimer.

The catalysed reaction is D-glycero-beta-D-manno-heptose 7-phosphate + ATP = D-glycero-beta-D-manno-heptose 1,7-bisphosphate + ADP + H(+). It catalyses the reaction D-glycero-beta-D-manno-heptose 1-phosphate + ATP + H(+) = ADP-D-glycero-beta-D-manno-heptose + diphosphate. The protein operates within nucleotide-sugar biosynthesis; ADP-L-glycero-beta-D-manno-heptose biosynthesis; ADP-L-glycero-beta-D-manno-heptose from D-glycero-beta-D-manno-heptose 7-phosphate: step 1/4. It participates in nucleotide-sugar biosynthesis; ADP-L-glycero-beta-D-manno-heptose biosynthesis; ADP-L-glycero-beta-D-manno-heptose from D-glycero-beta-D-manno-heptose 7-phosphate: step 3/4. In terms of biological role, catalyzes the phosphorylation of D-glycero-D-manno-heptose 7-phosphate at the C-1 position to selectively form D-glycero-beta-D-manno-heptose-1,7-bisphosphate. Functionally, catalyzes the ADP transfer from ATP to D-glycero-beta-D-manno-heptose 1-phosphate, yielding ADP-D-glycero-beta-D-manno-heptose. The chain is Bifunctional protein HldE from Salmonella agona (strain SL483).